A 1306-amino-acid chain; its full sequence is Disease resistance protein Roq1 (1306 aa).

A TIR domain is found at 10–179 (RSYDVFLSFR…QILKDIFDKF (170 aa)). Residues 19 to 24 (RGEDTR) and Gly52 contribute to the NAD(+) site. Residue Glu86 is part of the active site. The NB-ARC domain occupies 198–417 (KKLSSLLRMD…IDRLKDNPEG (220 aa)). LRR repeat units follow at residues 200–224 (LSSL…GVGK), 252–275 (LQHH…EFVD), 417–440 (GEIM…IFLD), 599–622 (PSKL…AKRL), 645–669 (ITNL…VGFL), 670–693 (KNLI…IQSE), 716–739 (MTHL…IEHL), 741–763 (SLEN…IWRF), 784–807 (SNCT…IGNL), 808–831 (TSLN…IWGL), 832–857 (TSLT…AINH), 878–902 (LDLL…IWML), 904–926 (FLRI…LGHL), 927–949 (EHLE…VARL), 961–983 (FAIG…VFGS), 987–1010 (LGSV…MNQL), 1013–1036 (LEYL…SIKE), and 1045–1070 (LRIM…EYQN).

Belongs to the disease resistance TIR-NB-LRR family. Homodimer.

The catalysed reaction is NAD(+) + H2O = ADP-D-ribose + nicotinamide + H(+). It catalyses the reaction NAD(+) = 2'cADPR + nicotinamide + H(+). Functionally, disease resistance (R) protein that specifically recognizes the Xanthomonas and Pseudomonas effector proteins XopQ and HopQ1, and triggers cell death. An NAD(+) hydrolase (NADase): in response to activation, catalyzes cleavage of NAD(+) into ADP-D-ribose (ADPR) and nicotinamide; NAD(+) cleavage triggers a defense system that promotes cell death. Makes small amounts of 2' cyclic ADPR (2'cADPR). This Nicotiana benthamiana protein is Disease resistance protein Roq1.